A 210-amino-acid chain; its full sequence is Probable GTP-binding protein EngB (210 aa).

The EngB-type G domain occupies 29–203 (NGIEIAFAGR…SNKLDSWFAP (175 aa)). GTP contacts are provided by residues 37–44 (GRSNAGKS), 64–68 (GRTQL), 82–85 (DLPG), 149–152 (TKAD), and 181–184 (IYSA). 2 residues coordinate Mg(2+): S44 and T66.

Belongs to the TRAFAC class TrmE-Era-EngA-EngB-Septin-like GTPase superfamily. EngB GTPase family. Mg(2+) serves as cofactor.

Its function is as follows. Necessary for normal cell division and for the maintenance of normal septation. The polypeptide is Probable GTP-binding protein EngB (Haemophilus ducreyi (strain 35000HP / ATCC 700724)).